We begin with the raw amino-acid sequence, 206 residues long: Threonine efflux protein (206 aa).

Residues 1 to 21 traverse the membrane as a helical segment; it reads MMMLFFTVAMVHIVALMSPGP. Topologically, residues 22–43 are periplasmic; it reads DFFFVSQTAVSRSRKEAMMGVL. A helical transmembrane segment spans residues 44–64; the sequence is GITCGVMVWAGVALLGLHLII. The Cytoplasmic segment spans residues 65-66; the sequence is EK. Residues 67 to 87 traverse the membrane as a helical segment; the sequence is MAWLHTIIMVGGGLYLCWMGY. At 88–149 the chain is on the periplasmic side; sequence QMLRGALKKQ…VGDNVGAAAR (62 aa). A helical membrane pass occupies residues 150 to 173; that stretch reads WGIFALITLETLAWFTVVASLFAL. The Cytoplasmic segment spans residues 174–206; sequence PKMRRGYQRLAKWIDGFAGALFAGFGIHLIISR.

The protein belongs to the Rht family.

The protein resides in the cell inner membrane. Functionally, conducts the efflux of threonine. The chain is Threonine efflux protein (rhtC) from Salmonella typhimurium (strain LT2 / SGSC1412 / ATCC 700720).